The following is a 324-amino-acid chain: Hydroxyacylglutathione hydrolase 2, mitochondrial (324 aa).

Residues 1-64 constitute a mitochondrion transit peptide; it reads MQTISKASSA…KSIRVSKFCS (64 aa). Zn(2+) is bound by residues His124 and His126. Residues Asp128 and His129 each contribute to the Fe cation site. Zn(2+)-binding residues include His182 and Asp201. Fe cation is bound by residues Asp201 and His239.

This sequence belongs to the metallo-beta-lactamase superfamily. Glyoxalase II family. As to quaternary structure, monomer. It depends on Fe(3+) as a cofactor. Fe(2+) is required as a cofactor. The cofactor is Zn(2+).

It localises to the mitochondrion. The enzyme catalyses an S-(2-hydroxyacyl)glutathione + H2O = a 2-hydroxy carboxylate + glutathione + H(+). It functions in the pathway secondary metabolite metabolism; methylglyoxal degradation; (R)-lactate from methylglyoxal: step 2/2. In terms of biological role, thiolesterase that catalyzes the hydrolysis of S-D-lactoyl-glutathione to form glutathione and D-lactic acid. In Arabidopsis thaliana (Mouse-ear cress), this protein is Hydroxyacylglutathione hydrolase 2, mitochondrial.